Here is a 147-residue protein sequence, read N- to C-terminus: DNA-directed RNA polymerase RPB6 homolog (147 aa).

This sequence belongs to the archaeal RpoK/eukaryotic RPB6 RNA polymerase subunit family. In terms of assembly, part of the viral DNA-directed RNA polymerase that consists of 8 polII-like subunits (RPB1, RPB2, RPB3, RPB5, RPB6, RPB7, RPB9, RPB10), a capping enzyme and a termination factor.

Its subcellular location is the host cytoplasm. The protein localises to the virion. Component of the DNA-directed RNA polymerase (RNAP) that catalyzes the transcription in the cytoplasm of viral DNA into RNA using the four ribonucleoside triphosphates as substrates. This is DNA-directed RNA polymerase RPB6 homolog from Ornithodoros (relapsing fever ticks).